We begin with the raw amino-acid sequence, 436 residues long: Chromosomal replication initiator protein DnaA (436 aa).

The domain I, interacts with DnaA modulators stretch occupies residues 1–69 (MLADEVIELL…ANIFEVKTGI (69 aa)). Positions 69–99 (IKPVISITTQKNRVSIKAKDIDVKQIRTQSS) are domain II. Residues 100-314 (LLNPSYTFES…SAIININAFA (215 aa)) are domain III, AAA+ region. ATP contacts are provided by Gly144, Gly146, Lys147, and Thr148. The domain IV, binds dsDNA stretch occupies residues 315–436 (NIMRQEITLE…ELKNKITSKE (122 aa)).

Belongs to the DnaA family. As to quaternary structure, oligomerizes as a right-handed, spiral filament on DNA at oriC.

Its subcellular location is the cytoplasm. Its function is as follows. Plays an essential role in the initiation and regulation of chromosomal replication. ATP-DnaA binds to the origin of replication (oriC) to initiate formation of the DNA replication initiation complex once per cell cycle. Binds the DnaA box (a 9 base pair repeat at the origin) and separates the double-stranded (ds)DNA. Forms a right-handed helical filament on oriC DNA; dsDNA binds to the exterior of the filament while single-stranded (ss)DNA is stabiized in the filament's interior. The ATP-DnaA-oriC complex binds and stabilizes one strand of the AT-rich DNA unwinding element (DUE), permitting loading of DNA polymerase. After initiation quickly degrades to an ADP-DnaA complex that is not apt for DNA replication. Binds acidic phospholipids. This chain is Chromosomal replication initiator protein DnaA, found in Campylobacter fetus subsp. fetus (strain 82-40).